Here is a 170-residue protein sequence, read N- to C-terminus: Flavin reductase (NADPH) (170 aa).

This sequence belongs to the non-flavoprotein flavin reductase family.

The enzyme catalyses reduced riboflavin + NADP(+) = riboflavin + NADPH + 2 H(+). Its function is as follows. Catalyzes the NADH-dependent reduction of FAD to provide FADH2 for the halogenase RebH. The sequence is that of Flavin reductase (NADPH) (rbmH) from Lentzea aerocolonigenes (Lechevalieria aerocolonigenes).